The following is a 271-amino-acid chain: Large ribosomal subunit protein uL2cz/uL2cy (271 aa).

2 disordered regions span residues 1-22 (MAKH…DRQV) and 223-271 (PVDH…RRRK).

This sequence belongs to the universal ribosomal protein uL2 family. As to quaternary structure, part of the 50S ribosomal subunit.

It localises to the plastid. Its subcellular location is the chloroplast. The sequence is that of Large ribosomal subunit protein uL2cz/uL2cy (rpl2-A) from Sorghum bicolor (Sorghum).